Consider the following 338-residue polypeptide: tRNA N6-adenosine threonylcarbamoyltransferase (338 aa).

Fe cation is bound by residues His111 and His115. Residues 134–138 (LVSGG), Asp167, Gly180, and Asn272 each bind substrate. Residue Asp300 coordinates Fe cation.

The protein belongs to the KAE1 / TsaD family. Requires Fe(2+) as cofactor.

The protein localises to the cytoplasm. The catalysed reaction is L-threonylcarbamoyladenylate + adenosine(37) in tRNA = N(6)-L-threonylcarbamoyladenosine(37) in tRNA + AMP + H(+). In terms of biological role, required for the formation of a threonylcarbamoyl group on adenosine at position 37 (t(6)A37) in tRNAs that read codons beginning with adenine. Is involved in the transfer of the threonylcarbamoyl moiety of threonylcarbamoyl-AMP (TC-AMP) to the N6 group of A37, together with TsaE and TsaB. TsaD likely plays a direct catalytic role in this reaction. This is tRNA N6-adenosine threonylcarbamoyltransferase from Aliivibrio fischeri (strain MJ11) (Vibrio fischeri).